Reading from the N-terminus, the 411-residue chain is Gamma-glutamyl phosphate reductase (411 aa).

The protein belongs to the gamma-glutamyl phosphate reductase family.

Its subcellular location is the cytoplasm. It catalyses the reaction L-glutamate 5-semialdehyde + phosphate + NADP(+) = L-glutamyl 5-phosphate + NADPH + H(+). It functions in the pathway amino-acid biosynthesis; L-proline biosynthesis; L-glutamate 5-semialdehyde from L-glutamate: step 2/2. Catalyzes the NADPH-dependent reduction of L-glutamate 5-phosphate into L-glutamate 5-semialdehyde and phosphate. The product spontaneously undergoes cyclization to form 1-pyrroline-5-carboxylate. This Wolinella succinogenes (strain ATCC 29543 / DSM 1740 / CCUG 13145 / JCM 31913 / LMG 7466 / NCTC 11488 / FDC 602W) (Vibrio succinogenes) protein is Gamma-glutamyl phosphate reductase.